The chain runs to 563 residues: Arginine--tRNA ligase (563 aa).

Positions 121-131 (PNIAKPFSIGH) match the 'HIGH' region motif.

This sequence belongs to the class-I aminoacyl-tRNA synthetase family. Monomer.

It localises to the cytoplasm. It catalyses the reaction tRNA(Arg) + L-arginine + ATP = L-arginyl-tRNA(Arg) + AMP + diphosphate. The sequence is that of Arginine--tRNA ligase from Streptococcus mutans serotype c (strain ATCC 700610 / UA159).